We begin with the raw amino-acid sequence, 789 residues long: Polyribonucleotide nucleotidyltransferase (789 aa).

The Mg(2+) site is built by aspartate 494 and aspartate 500. The 60-residue stretch at 561–620 (PRIESIFINKDKIRNVIGSGGKNIREICEKTGARVEIMQDGTVMIYAINNDAVEYAKNMI) folds into the KH domain. The 68-residue stretch at 630 to 697 (GKVFDGTVIE…DREYVQLSMR (68 aa)) folds into the S1 motif domain. The disordered stretch occupies residues 709–789 (GELYNIRKTN…NEVPRKPRFF (81 aa)). Positions 737–749 (SEKKRRGSGRSRR) are enriched in basic residues. Over residues 763 to 780 (NNGFGNGNRSFNDNRNGN) the composition is skewed to low complexity.

It belongs to the polyribonucleotide nucleotidyltransferase family. Mg(2+) is required as a cofactor.

The protein localises to the cytoplasm. The enzyme catalyses RNA(n+1) + phosphate = RNA(n) + a ribonucleoside 5'-diphosphate. Involved in mRNA degradation. Catalyzes the phosphorolysis of single-stranded polyribonucleotides processively in the 3'- to 5'-direction. The polypeptide is Polyribonucleotide nucleotidyltransferase (Ehrlichia ruminantium (strain Gardel)).